Reading from the N-terminus, the 293-residue chain is Protease HtpX (293 aa).

The next 2 helical transmembrane spans lie at 4 to 24 and 34 to 54; these read IALF…VLSL and GLMI…LLMS. A Zn(2+)-binding site is contributed by His139. Glu140 is a catalytic residue. His143 contacts Zn(2+). The next 2 membrane-spanning stretches (helical) occupy residues 158 to 178 and 193 to 213; these read VVNT…AGFM and LIYF…ASII. A Zn(2+)-binding site is contributed by Glu222.

It belongs to the peptidase M48B family. It depends on Zn(2+) as a cofactor.

Its subcellular location is the cell inner membrane. This chain is Protease HtpX, found in Escherichia coli O127:H6 (strain E2348/69 / EPEC).